Here is a 295-residue protein sequence, read N- to C-terminus: Elongation factor Ts (295 aa).

Positions 79–82 (TDFV) are involved in Mg(2+) ion dislocation from EF-Tu.

This sequence belongs to the EF-Ts family.

The protein resides in the cytoplasm. In terms of biological role, associates with the EF-Tu.GDP complex and induces the exchange of GDP to GTP. It remains bound to the aminoacyl-tRNA.EF-Tu.GTP complex up to the GTP hydrolysis stage on the ribosome. The polypeptide is Elongation factor Ts (Bacillus cereus (strain G9842)).